A 189-amino-acid polypeptide reads, in one-letter code: MASYSMGDLKKGLKIELDGVPYKIVEYQHVKPGKGAAFVRVKIKSFVNGKVLEKTFHAGDKCESPNLVEKEMQYLYDDGEFCQFMDVESYEQVAISDEDIGEAKKWMIDGMMVQILFHNGKAIGVEVPQVVELKIVETQPNFKGDTQGSNKKPATLESGAVVQIPFHVLEGEVIRVDTVRGEYIERANK.

Belongs to the elongation factor P family.

Its subcellular location is the cytoplasm. It participates in protein biosynthesis; polypeptide chain elongation. In terms of biological role, involved in peptide bond synthesis. Stimulates efficient translation and peptide-bond synthesis on native or reconstituted 70S ribosomes in vitro. Probably functions indirectly by altering the affinity of the ribosome for aminoacyl-tRNA, thus increasing their reactivity as acceptors for peptidyl transferase. The protein is Elongation factor P of Campylobacter fetus subsp. fetus (strain 82-40).